A 545-amino-acid polypeptide reads, in one-letter code: Heparanase (545 aa).

The signal sequence occupies residues 1-37 (MLACRKPGLRPPLLLLLPLLGPLGPCSPGTPAAAAPA). 64 to 66 (DAN) is a heparan sulfate group binding site. Positions 112 to 159 (PAFEERSYWLSQSNQDICKSGSIPSDVEEKLRLEWPFQEQVLLREQYQ) are cleaved as a propeptide — linker peptide. C129 and C181 are joined by a disulfide. 160–164 (KKFTN) contacts heparan sulfate group. N-linked (GlcNAc...) asparagine glycans are attached at residues N164 and N219. The active-site Proton donor is E227. Residues 272–282 (QPRRNTVKMLK), H298, and R305 each bind heparan sulfate group. Residues 290–419 (EVIDSVTWHH…LLFKKLVGNK (130 aa)) are required for heterodimerization with the heparanase 8 kDa subunit. E345 (nucleophile) is an active-site residue. Heparan sulfate group-binding positions include 350 to 352 (FGG) and 391 to 393 (GNY). A disulfide bridge connects residues C439 and C544. An N-linked (GlcNAc...) asparagine glycan is attached at N461. The tract at residues 529–545 (FSYGFFVIRNAKVAACI) is required for transferring proheparanase to the Golgi apparatus, secretion and subsequent enzyme activity and for enhancement of PKB/AKT1 phosphorylation.

This sequence belongs to the glycosyl hydrolase 79 family. Heterodimer; heterodimer formation between the 8 kDa and the 50 kDa subunits is required for enzyme activity. Interacts with TF; the interaction, inhibited by heparin, enhances the generation of activated factor X and activates coagulation. Interacts with HRG; the interaction is enhanced at acidic pH, partially inhibits binding of HPSE to cell surface receptors and modulates its enzymatic activity. Interacts with SDC1; the interaction enhances the shedding of SDC1. Interacts with HPSE2. Post-translationally, proteolytically processed. The cleavage of the 65 kDa form leads to the generation of a linker peptide, and the 8 kDa and the 50 kDa products. The active form, the 8/50 kDa heterodimer, is resistant to degradation. Complete removal of the linker peptide appears to be a prerequisite to the complete activation of the enzyme. N-glycosylated. Glycosylation of the 50 kDa subunit appears to be essential for its solubility. Highly expressed in placenta and weakly in the kidney, lung, spleen and uterus.

The protein resides in the lysosome membrane. The protein localises to the secreted. It is found in the nucleus. It carries out the reaction endohydrolysis of (1-&gt;4)-beta-D-glycosidic bonds of heparan sulfate chains in heparan sulfate proteoglycan.. Inhibited by laminarin sulfate and, to a lower extent, by heparin, sulfamin and EDTA. Activated by calcium and magnesium. Functionally, endoglycosidase that cleaves heparan sulfate proteoglycans (HSPGs) into heparan sulfate side chains and core proteoglycans. Participates in extracellular matrix (ECM) degradation and remodeling. Selectively cleaves the linkage between a glucuronic acid unit and an N-sulfo glucosamine unit carrying either a 3-O-sulfo or a 6-O-sulfo group. Can also cleave the linkage between a glucuronic acid unit and an N-sulfo glucosamine unit carrying a 2-O-sulfo group, but not linkages between a glucuronic acid unit and a 2-O-sulfated iduronic acid moiety. Essentially inactive at neutral pH but becomes active under acidic conditions such as during tumor invasion and in inflammatory processes. Facilitates cell migration associated with metastasis, wound healing and inflammation. Enhances shedding of syndecans. Acts as a procoagulant by enhancing the generation of activated factor X/F10 in the presence of tissue factor/TF and activated factor VII/F7. Independent of its enzymatic activity, increases cell adhesion to the extracellular matrix (ECM). Enhances AKT1/PKB phosphorylation, possibly via interaction with a lipid raft-resident receptor. Plays a role in the regulation of osteogenesis. Enhances angiogenesis through up-regulation of SRC-mediated activation of VEGF. Implicated in hair follicle inner root sheath differentiation and hair homeostasis. This chain is Heparanase (HPSE), found in Bos taurus (Bovine).